We begin with the raw amino-acid sequence, 205 residues long: ATP phosphoribosyltransferase (205 aa).

The protein belongs to the ATP phosphoribosyltransferase family. Short subfamily. Heteromultimer composed of HisG and HisZ subunits.

It localises to the cytoplasm. It carries out the reaction 1-(5-phospho-beta-D-ribosyl)-ATP + diphosphate = 5-phospho-alpha-D-ribose 1-diphosphate + ATP. The protein operates within amino-acid biosynthesis; L-histidine biosynthesis; L-histidine from 5-phospho-alpha-D-ribose 1-diphosphate: step 1/9. Catalyzes the condensation of ATP and 5-phosphoribose 1-diphosphate to form N'-(5'-phosphoribosyl)-ATP (PR-ATP). Has a crucial role in the pathway because the rate of histidine biosynthesis seems to be controlled primarily by regulation of HisG enzymatic activity. In Helicobacter hepaticus (strain ATCC 51449 / 3B1), this protein is ATP phosphoribosyltransferase.